The sequence spans 470 residues: Acyltransferase BOA11 (470 aa).

Residue H156 is the Proton acceptor of the active site.

It belongs to the plant acyltransferase family.

Its pathway is polyketide biosynthesis. Functionally, acyltransferase; part of the gene cluster B that mediates the biosynthesis of botcinic acid and its botcinin derivatives, acetate-derived polyketides that contribute to virulence when combined with the sesquiterpene botrydial. Botcinic acid and its derivatives have been shown to induce chlorosis and necrosis during host plant infection, but also have antifungal activities. Two polyketide synthases, BOA6 and BOA9, are involved in the biosynthesis of botcinins. BOA6 mediates the formation of the per-methylated tetraketide core by condensation of four units of malonyl-CoA with one unit of acetyl-CoA, which would be methylated in activated methylene groups to yield a bicyclic acid intermediate that could then either be converted to botrylactone derivatives or lose the starter acetate unit through a retro-Claisen type C-C bond cleavage to yield botcinin derivatives. The second polyketide synthase, BOA9, is probably required for the biosynthesis of the tetraketide side chain of botcinins. The methyltransferase (MT) domain within BOA6 is probably responsible for the incorporation of four methyl groups. The trans-enoyl reductase BOA5 might take over the enoyl reductase function of BOA6 that misses an ER domain. The monooxygenases BOA2, BOA3 and BOA4 might be involved in further hydroxylations at C4, C5 and C8, whereas BOA7, close to BOA9, could potentially be involved in the hydroxylation at C4 in the side chain of botcinins. This is Acyltransferase BOA11 from Botryotinia fuckeliana (strain B05.10) (Noble rot fungus).